A 332-amino-acid chain; its full sequence is Ubiquinol oxidase 1a, mitochondrial (332 aa).

The transit peptide at methionine 1–methionine 54 directs the protein to the mitochondrion. A helical transmembrane segment spans residues alanine 157–leucine 177. Residues glutamate 161, glutamate 200, and histidine 203 each contribute to the Fe cation site. Residues alanine 219–serine 239 traverse the membrane as a helical segment. Glutamate 251, glutamate 302, and histidine 305 together coordinate Fe cation.

This sequence belongs to the alternative oxidase family. As to quaternary structure, homodimer; disulfide-linked. It depends on Fe cation as a cofactor. Expressed in roots, leaf sheaths and leaf blades.

It localises to the mitochondrion inner membrane. It catalyses the reaction 2 a ubiquinol + O2 = 2 a ubiquinone + 2 H2O. Its function is as follows. Catalyzes the cyanide-resistant oxidation of ubiquinol and the reduction of molecular oxygen to water, but does not translocate protons and consequently is not linked to oxidative phosphorylation. May increase respiration when the cytochrome respiratory pathway is restricted, or in response to low temperatures. The sequence is that of Ubiquinol oxidase 1a, mitochondrial from Oryza sativa subsp. japonica (Rice).